A 172-amino-acid chain; its full sequence is Ribosome maturation factor RimM (172 aa).

A PRC barrel domain is found at 94–167; it reads ENEFYLFQLK…FIKVELLPGM (74 aa).

Belongs to the RimM family. In terms of assembly, binds ribosomal protein uS19.

It is found in the cytoplasm. Functionally, an accessory protein needed during the final step in the assembly of 30S ribosomal subunit, possibly for assembly of the head region. Essential for efficient processing of 16S rRNA. May be needed both before and after RbfA during the maturation of 16S rRNA. It has affinity for free ribosomal 30S subunits but not for 70S ribosomes. The protein is Ribosome maturation factor RimM of Carboxydothermus hydrogenoformans (strain ATCC BAA-161 / DSM 6008 / Z-2901).